The chain runs to 92 residues: Small ribosomal subunit protein uS19 (92 aa).

Belongs to the universal ribosomal protein uS19 family.

Protein S19 forms a complex with S13 that binds strongly to the 16S ribosomal RNA. The polypeptide is Small ribosomal subunit protein uS19 (Shewanella amazonensis (strain ATCC BAA-1098 / SB2B)).